A 231-amino-acid chain; its full sequence is Chlorophyll a-b binding protein 1B-20, chloroplastic (231 aa).

Residues 1–25 (RIQAYRFRTRVPPSPAASGSPRSTR) are disordered. The N-terminal 31 residues, 1–31 (RIQAYRFRTRVPPSPAASGSPRSTRRDVAVQ), are a transit peptide targeting the chloroplast. Trp36 contributes to the chlorophyll b binding site. A chlorophyll a-binding site is contributed by Phe56. Positions 80, 118, 133, and 136 each coordinate chlorophyll b. Residues Lys182, Glu183, Asn186, Arg188, Gln200, and His215 each contribute to the chlorophyll a site. Residues 183–199 (ELANGRLAMLAFLGFLV) form a helical membrane-spanning segment.

It belongs to the light-harvesting chlorophyll a/b-binding (LHC) protein family. The LHC complex consists of chlorophyll a-b binding proteins. Binds at least 14 chlorophylls (8 Chl-a and 6 Chl-b) and carotenoids such as lutein and neoxanthin. is required as a cofactor. Photoregulated by reversible phosphorylation of its threonine residues.

It is found in the plastid. Its subcellular location is the chloroplast thylakoid membrane. Its function is as follows. The light-harvesting complex (LHC) functions as a light receptor, it captures and delivers excitation energy to photosystems with which it is closely associated. The sequence is that of Chlorophyll a-b binding protein 1B-20, chloroplastic (LHC Ib-20) from Hordeum vulgare (Barley).